The sequence spans 618 residues: Manganese lipoxygenase (618 aa).

Positions 1 to 16 (MRSRILAIVFAARHVA) are cleaved as a signal peptide. Low complexity predominate over residues 36-45 (SSTTVLPSPT). Residues 36 to 58 (SSTTVLPSPTQYTLPNNDPNQGA) are disordered. Polar residues predominate over residues 46 to 58 (QYTLPNNDPNQGA). Positions 47-618 (YTLPNNDPNQ…PAVNPFFLSV (572 aa)) constitute a Lipoxygenase domain. N-linked (GlcNAc...) asparagine glycosylation is found at asparagine 60, asparagine 91, asparagine 106, asparagine 116, and asparagine 157. Histidine 290, histidine 294, histidine 478, and asparagine 482 together coordinate Mn(2+). N-linked (GlcNAc...) asparagine glycosylation is present at asparagine 513. Valine 618 serves as a coordination point for Mn(2+).

The protein belongs to the lipoxygenase family. Manganese lipoxygenase subfamily. Mn(2+) serves as cofactor. N- and O-glycosylated.

It localises to the secreted. It catalyses the reaction (9Z,12Z)-octadecadienoate + O2 = (11S)-hydroperoxy-(9Z,12Z)-octadecadienoate. It carries out the reaction (9Z,12Z)-octadecadienoate + O2 = (13R)-hydroperoxy-(9Z,11E)-octadecadienoate. The enzyme catalyses (9Z,12Z,15Z)-octadecatrienoate + O2 = (11S)-hydroperoxy-(9Z,12Z,15Z)-octadecatrienoate. The catalysed reaction is (9Z,12Z,15Z)-octadecatrienoate + O2 = (13R)-hydroperoxy-(9Z,11E,15Z)-octadecatrienoate. In terms of biological role, lipoxygenase that metabolizes linoleic and alpha-linolenic acids to 11S- and 13R-hydroperoxy fatty acids. At the end of lipoxygenation, the intermediate product 11S-HPODE from linoleic acid is then transformed into 13R-HPODE as the final product. It also acts on alpha-linolenic acid producing 11S-HPOTrE and 13R-HPOTrE with subsequent transformation of 11S-HPOTrE to 13R-HPOTrE as final product. This Gaeumannomyces avenae (Oat take-all root rot fungus) protein is Manganese lipoxygenase.